The chain runs to 63 residues: Large ribosomal subunit protein uL29 (63 aa).

The protein belongs to the universal ribosomal protein uL29 family.

The polypeptide is Large ribosomal subunit protein uL29 (Pelagibacter ubique (strain HTCC1062)).